The following is a 314-amino-acid chain: tRNA-cytidine(32) 2-sulfurtransferase (314 aa).

A PP-loop motif motif is present at residues 57–62; it reads SGGKDS. Residues C132, C135, and C223 each coordinate [4Fe-4S] cluster.

Belongs to the TtcA family. As to quaternary structure, homodimer. Requires Mg(2+) as cofactor. [4Fe-4S] cluster is required as a cofactor.

The protein localises to the cytoplasm. It carries out the reaction cytidine(32) in tRNA + S-sulfanyl-L-cysteinyl-[cysteine desulfurase] + AH2 + ATP = 2-thiocytidine(32) in tRNA + L-cysteinyl-[cysteine desulfurase] + A + AMP + diphosphate + H(+). It functions in the pathway tRNA modification. Its function is as follows. Catalyzes the ATP-dependent 2-thiolation of cytidine in position 32 of tRNA, to form 2-thiocytidine (s(2)C32). The sulfur atoms are provided by the cysteine/cysteine desulfurase (IscS) system. In Alkalilimnicola ehrlichii (strain ATCC BAA-1101 / DSM 17681 / MLHE-1), this protein is tRNA-cytidine(32) 2-sulfurtransferase.